The following is a 1671-amino-acid chain: AF4/FMR2 family member lilli (1671 aa).

6 disordered regions span residues 53-79 (YSQNYNMEEYERRKRREREKIERQQGI), 126-304 (SAPG…EKDV), 393-599 (LAGE…SNKW), 723-761 (DSGTSASGSSSSSSSSSDSAVGGEVVPMPGPGETFQLPG), 774-1162 (PTQS…TTPH), and 1185-1311 (KLTP…LQIG). Residues 70-79 (REKIERQQGI) are compositionally biased toward basic and acidic residues. 2 stretches are compositionally biased toward low complexity: residues 145 to 179 (SLGHSPSSASSAAGPTSASATTALPGQQQHYQQQQ) and 210 to 242 (PSSSGMAPPRGPPRSSSSNSNSSSATNNASSGG). Residue threonine 416 is modified to Phosphothreonine. A compositionally biased stretch (basic and acidic residues) spans 424–437 (LKTEKNHSLEKQDS). Residues 439-450 (LENDLELSESED) show a composition bias toward acidic residues. 2 positions are modified to phosphoserine: serine 446 and serine 448. Low complexity predominate over residues 459–479 (SAGNSSNSSESDSSESGSESS). Residues 487–496 (HPNHQQHHHQ) are compositionally biased toward basic residues. Composition is skewed to low complexity over residues 497–522 (LQQQQQASMQQQQVLQQQQQHRPQPL) and 561–587 (PAGVNSSAVMGAGSVSGGTLSSGGSSS). Polar residues predominate over residues 588 to 599 (NKTPSPTESNKW). Low complexity predominate over residues 723–755 (DSGTSASGSSSSSSSSSDSAVGGEVVPMPGPGE). Polar residues predominate over residues 774 to 786 (PTQSQKAPPSNSV). The span at 800-810 (QRQKKPRKKKA) shows a compositional bias: basic residues. Residues serine 819 and serine 820 each carry the phosphoserine modification. Positions 849-861 (KKGRGRPRKQQQS) form a DNA-binding region, a.T hook. A compositionally biased stretch (low complexity) spans 858-896 (QQQSGGSGNLSSASAGSSSQTKGPTLTAAKKPLAKTPLA). A phosphoserine mark is found at serine 869 and serine 871. The span at 907 to 917 (SQSSSNGNTPT) shows a compositional bias: polar residues. 2 stretches are compositionally biased toward low complexity: residues 947–963 (SSSAESSSKSSSSSSSS) and 988–1002 (ALLGSGSSSASSSGS). Residues 1009–1020 (SRSQVGSGQALA) are compositionally biased toward polar residues. Over residues 1032 to 1058 (SQHSQHLSSSECSSSSGGCTAVCSSSS) the composition is skewed to low complexity. Positions 1063–1080 (EGRREKERERKPKSDKNK) are enriched in basic and acidic residues. Residues 1120 to 1130 (QPPPPHAPPAA) show a composition bias toward pro residues. The segment covering 1188 to 1203 (PAQQNGHLTPKDQATN) has biased composition (polar residues). Basic and acidic residues-rich tracts occupy residues 1224-1241 (EHPVKPEPELDAGYEAKF) and 1250-1280 (FQLKQERDRDRERERERERERERDREREQPP). A Phosphoserine modification is found at serine 1360. Position 1362 is a phosphothreonine (threonine 1362). The segment covering 1562–1581 (NTPSSISPSNSVGSQGSGSN) has biased composition (low complexity). The interval 1562 to 1586 (NTPSSISPSNSVGSQGSGSNTPPGR) is disordered.

The protein belongs to the AF4 family.

The protein localises to the nucleus. Functionally, has a role in transcriptional regulation. Acts in parallel with the Ras/MAPK and the PI3K/PKB pathways in the control of cell identity and cellular growth. Essential for regulation of the cytoskeleton and cell growth but not for cell proliferation or growth rate. Required specifically for the microtubule-based basal transport of lipid droplets. Plays a partially redundant function downstream of Raf in cell fate specification in the developing eye. Pair-rule protein that regulates embryonic cellularization, gastrulation and segmentation. This chain is AF4/FMR2 family member lilli, found in Drosophila yakuba (Fruit fly).